Here is a 315-residue protein sequence, read N- to C-terminus: Protein sprouty homolog 2 (315 aa).

The span at 1–15 (MEARAQSGNGSQPLL) shows a compositional bias: polar residues. The disordered stretch occupies residues 1–140 (MEARAQSGNG…SEQRLLGSSF (140 aa)). Residues 20–32 (DGGRPRGEPDPRD) show a composition bias toward basic and acidic residues. A compositionally biased stretch (low complexity) spans 108–140 (SRSISTVSSGSRSSTRTSTSSSSSEQRLLGSSF). Residues 118 to 315 (SRSSTRTSTS…VPRRNFEKPT (198 aa)) form a required for interaction with CAV1 region. The SPR domain occupies 177-291 (RCEDCGKCKC…CYDRVNRPGC (115 aa)). The interval 178-315 (CEDCGKCKCK…VPRRNFEKPT (138 aa)) is required for interaction with TESK1.

Belongs to the sprouty family. Forms heterodimers with SPRY1. Forms a tripartite complex containing GAB1, METTL13 and SPRY2. Within the complex interacts with METTL13. Interacts with RAF1. Interacts (via C-terminus) with TESK1 (via C-terminus); the interaction disrupts SPRY2 interaction with GRB2, potentially via disruption of SPRY2 serine dephosphorylation. Interacts with PPP2R1A/PP2A-A and PPP2CA/PP2A-C; the interaction with PPP2CA/PP2A-C is inhibited by interaction with TESK1, possibly by vesicular sequestration of SPRY2. Inhibition of the interaction with the serine/threonine-protein phosphatase 2A (PP2A) holoenzyme results in loss of PP2A-mediated dephosphorylation, resulting in the loss of SPRY2 interaction with GRB2. Interacts with GRB2. Interacts with CBL/C-CBL; the interaction inhibits CBL-mediated ubiquitination of EGFR. Interacts (via C-terminus) with CAV1 (via C-terminus). Post-translationally, cleaved at Pro-144 by the prolyl endopeptidase FAP (seprase) activity (in vitro).

It localises to the cytoplasm. It is found in the cytoskeleton. The protein localises to the cell projection. Its subcellular location is the ruffle membrane. Functionally, antagonist of fibroblast growth factor (FGF) pathways via inhibition of FGF-mediated phosphorylation of ERK1/2. Thereby acts as an antagonist of FGF-induced retinal lens fiber differentiation, may inhibit limb bud outgrowth and may negatively modulate respiratory organogenesis. Inhibits TGFB-induced epithelial-to-mesenchymal transition in retinal lens epithelial cells. Inhibits CBL/C-CBL-mediated EGFR ubiquitination. This is Protein sprouty homolog 2 (SPRY2) from Pongo abelii (Sumatran orangutan).